The chain runs to 69 residues: U-Asilidin(12)-Dg3a (69 aa).

Residues 1-19 (MRFLNIFLFFAAIIAFATA) form the signal peptide. The propeptide occupies 20–33 (SQVFEEDEIDMEPR). 3 cysteine pairs are disulfide-bonded: C36–C59, C45–C65, and C49–C67.

This sequence belongs to the asilidin-12 family. As to expression, expressed by the venom gland.

It localises to the secreted. Its function is as follows. Moderately increases Kv11.1/KCNH2/ERG1 currents and shifts the voltage-dependence of the channel activation to hyperpolarised potentials. In vivo, induces neurotoxic effects when injected into insects (tested on L.cuprina and A.domesticus). This chain is U-Asilidin(12)-Dg3a, found in Dolopus genitalis (Giant Australian assassin fly).